A 137-amino-acid polypeptide reads, in one-letter code: Large ribosomal subunit protein uL16 (137 aa).

This sequence belongs to the universal ribosomal protein uL16 family. As to quaternary structure, part of the 50S ribosomal subunit.

Functionally, binds 23S rRNA and is also seen to make contacts with the A and possibly P site tRNAs. In Acinetobacter baumannii (strain SDF), this protein is Large ribosomal subunit protein uL16.